The chain runs to 150 residues: 3-dehydroquinate dehydratase (150 aa).

The active-site Proton acceptor is tyrosine 25. Positions 76, 82, and 89 each coordinate substrate. Histidine 102 serves as the catalytic Proton donor. Residues 103–104 (LS) and arginine 113 each bind substrate.

The protein belongs to the type-II 3-dehydroquinase family. As to quaternary structure, homododecamer.

The catalysed reaction is 3-dehydroquinate = 3-dehydroshikimate + H2O. Its pathway is metabolic intermediate biosynthesis; chorismate biosynthesis; chorismate from D-erythrose 4-phosphate and phosphoenolpyruvate: step 3/7. Catalyzes a trans-dehydration via an enolate intermediate. This is 3-dehydroquinate dehydratase from Trichodesmium erythraeum (strain IMS101).